The chain runs to 459 residues: Mitochondrial distribution and morphology protein 34 (459 aa).

The 190-residue stretch at 1-190 (MSFRFNEAVF…LPSLIFNTSQ (190 aa)) folds into the SMP-LTD domain. Residues 338–347 (RSNSNDDNAK) show a composition bias toward basic and acidic residues. The disordered stretch occupies residues 338 to 375 (RSNSNDDNAKPRRRKIKCKKTRTPSNLQSQGEQAVDDS). Over residues 348–359 (PRRRKIKCKKTR) the composition is skewed to basic residues.

The protein belongs to the MDM34 family. In terms of assembly, component of the ER-mitochondria encounter structure (ERMES) or MDM complex, composed of MMM1, MDM10, MDM12 and MDM34. Ubiquitinated by a SCF (SKP1-CUL1-F-box protein) E3 ubiquitin-protein ligase complex containing the F-box protein MDM30. Ubiquitination is important for mitochondrial integrity.

It localises to the mitochondrion outer membrane. Its function is as follows. Component of the ERMES/MDM complex, which serves as a molecular tether to connect the endoplasmic reticulum (ER) and mitochondria. Components of this complex are involved in the control of mitochondrial shape and protein biogenesis, and function in nonvesicular lipid trafficking between the ER and mitochondria. MDM34 is required for the interaction of the ER-resident membrane protein MMM1 and the outer mitochondrial membrane-resident beta-barrel protein MDM10. The protein is Mitochondrial distribution and morphology protein 34 of Saccharomyces cerevisiae (strain YJM789) (Baker's yeast).